Reading from the N-terminus, the 651-residue chain is Polyadenylate-binding protein 1 (651 aa).

A compositionally biased stretch (low complexity) spans 1–27; that stretch reads MSSTESPVPAAAAPAEAVPASTPAPAA. The interval 1 to 42 is disordered; that stretch reads MSSTESPVPAAAAPAEAVPASTPAPAAEQPAVGNGEQRNNAD. RRM domains lie at 47-125, 135-211, 227-304, and 330-407; these read TSLY…WSQR, GNIF…HHIP, TNVY…RAQK, and VNLY…LAQR. 2 disordered regions span residues 481–554 and 632–651; these read QPGQ…EADQ and QNDS…KTEA. Pro residues predominate over residues 529–540; that stretch reads AGQPVPGQPMPR. Residues 555–632 form the PABC domain; it reads PGALTAAALA…ALEVLKEYQQ (78 aa). The span at 636 to 651 shows a compositional bias: low complexity; sequence AGAEAEANAEAPKTEA.

It belongs to the polyadenylate-binding protein type-1 family. In terms of assembly, part of large ribonucleoprotein complexes (mRNPs) containing RNA-binding proteins RRM4 and PAB1, endosome-binding protein UPA1, core scaffold protein UPA2 and associated factor GRP1. Interacts (via PABC domain) with UPA1 (via PAM2 domain). Interacts (via PABC domain) with UPA2 (via PAM2 domains).

It localises to the cytoplasm. The protein localises to the cytoskeleton. Its subcellular location is the endosome. Its function is as follows. RNA-binding protein involved in the formation of polar-growing hyphae which is essential for infection by the plant pathogen. Component of endosomal mRNA transport that regulates polarity of the infectious hyphae by transporting a broad spectrum of cargo mRNAs from the nucleus to cell poles. This Mycosarcoma maydis (Corn smut fungus) protein is Polyadenylate-binding protein 1.